Consider the following 72-residue polypeptide: Translation initiation factor IF-1 (72 aa).

One can recognise an S1-like domain in the interval 1–72; the sequence is MAKDDVIEIQ…TKGRITYRFK (72 aa).

The protein belongs to the IF-1 family. As to quaternary structure, component of the 30S ribosomal translation pre-initiation complex which assembles on the 30S ribosome in the order IF-2 and IF-3, IF-1 and N-formylmethionyl-tRNA(fMet); mRNA recruitment can occur at any time during PIC assembly.

It is found in the cytoplasm. Its function is as follows. One of the essential components for the initiation of protein synthesis. Stabilizes the binding of IF-2 and IF-3 on the 30S subunit to which N-formylmethionyl-tRNA(fMet) subsequently binds. Helps modulate mRNA selection, yielding the 30S pre-initiation complex (PIC). Upon addition of the 50S ribosomal subunit IF-1, IF-2 and IF-3 are released leaving the mature 70S translation initiation complex. This Lacticaseibacillus paracasei (strain ATCC 334 / BCRC 17002 / CCUG 31169 / CIP 107868 / KCTC 3260 / NRRL B-441) (Lactobacillus paracasei) protein is Translation initiation factor IF-1.